A 447-amino-acid polypeptide reads, in one-letter code: Na(+)-translocating NADH-quinone reductase subunit A (447 aa).

It belongs to the NqrA family. In terms of assembly, composed of six subunits; NqrA, NqrB, NqrC, NqrD, NqrE and NqrF.

The catalysed reaction is a ubiquinone + n Na(+)(in) + NADH + H(+) = a ubiquinol + n Na(+)(out) + NAD(+). Its function is as follows. NQR complex catalyzes the reduction of ubiquinone-1 to ubiquinol by two successive reactions, coupled with the transport of Na(+) ions from the cytoplasm to the periplasm. NqrA to NqrE are probably involved in the second step, the conversion of ubisemiquinone to ubiquinol. This Saccharophagus degradans (strain 2-40 / ATCC 43961 / DSM 17024) protein is Na(+)-translocating NADH-quinone reductase subunit A.